We begin with the raw amino-acid sequence, 304 residues long: Protease HtpX homolog (304 aa).

The next 2 helical transmembrane spans lie at 14-34 and 39-59; these read IFIILGFFIFVLMVGAAIGII and YLNGLILAAVIGAFYILIMVM. Zn(2+) is bound at residue histidine 144. Residue glutamate 145 is part of the active site. Histidine 148 provides a ligand contact to Zn(2+). Transmembrane regions (helical) follow at residues 159-179 and 202-222; these read IAIALVAVIAILSDLAMRMIF and AIIYIVALIFVILAPIIATAI. Glutamate 231 serves as a coordination point for Zn(2+).

It belongs to the peptidase M48B family. The cofactor is Zn(2+).

It is found in the cell membrane. This chain is Protease HtpX homolog, found in Listeria monocytogenes serotype 4b (strain CLIP80459).